An 828-amino-acid chain; its full sequence is Conserved oligomeric Golgi complex subunit 3 (828 aa).

The residue at position 2 (Ala-2) is an N-acetylalanine. A disordered region spans residues 504-543 (DEQKKVPSEASFSDVHLEEGESNSLTKSGSTESLNPRPQT). A compositionally biased stretch (polar residues) spans 525–543 (SNSLTKSGSTESLNPRPQT). At Ser-663 the chain carries Phosphoserine.

It belongs to the COG3 family. As to quaternary structure, component of the conserved oligomeric Golgi complex which is composed of eight different subunits and is required for normal Golgi morphology and localization. Interacts with TMEM115. Widely expressed with highest levels in pancreas and testis and lowest levels in lung.

It is found in the golgi apparatus. The protein resides in the golgi stack membrane. Involved in ER-Golgi transport. Also involved in retrograde (Golgi to ER) transport. The protein is Conserved oligomeric Golgi complex subunit 3 (COG3) of Homo sapiens (Human).